A 145-amino-acid chain; its full sequence is Ribosome-binding factor A (145 aa).

The tract at residues 126-145 is disordered; the sequence is RDLDTETDAEAGSETTKEED. The span at 130 to 145 shows a compositional bias: acidic residues; the sequence is TETDAEAGSETTKEED.

This sequence belongs to the RbfA family. In terms of assembly, monomer. Binds 30S ribosomal subunits, but not 50S ribosomal subunits or 70S ribosomes.

The protein resides in the cytoplasm. One of several proteins that assist in the late maturation steps of the functional core of the 30S ribosomal subunit. Associates with free 30S ribosomal subunits (but not with 30S subunits that are part of 70S ribosomes or polysomes). Required for efficient processing of 16S rRNA. May interact with the 5'-terminal helix region of 16S rRNA. The sequence is that of Ribosome-binding factor A from Azorhizobium caulinodans (strain ATCC 43989 / DSM 5975 / JCM 20966 / LMG 6465 / NBRC 14845 / NCIMB 13405 / ORS 571).